Reading from the N-terminus, the 157-residue chain is Endoribonuclease YbeY (157 aa).

The Zn(2+) site is built by His112, His116, and His122.

Belongs to the endoribonuclease YbeY family. The cofactor is Zn(2+).

It localises to the cytoplasm. Single strand-specific metallo-endoribonuclease involved in late-stage 70S ribosome quality control and in maturation of the 3' terminus of the 16S rRNA. This chain is Endoribonuclease YbeY, found in Marinobacter nauticus (strain ATCC 700491 / DSM 11845 / VT8) (Marinobacter aquaeolei).